The chain runs to 317 residues: L-lactate dehydrogenase (317 aa).

Residues V17, D38, K43, Y69, and 83–84 each bind NAD(+); that span reads GA. The substrate site is built by Q86 and R92. NAD(+) is bound by residues S105, 122–124, and S147; that span reads ATN. A substrate-binding site is contributed by 124–127; it reads NPVD. Position 152–155 (152–155) interacts with substrate; that stretch reads DTAR. Beta-D-fructose 1,6-bisphosphate is bound by residues R157 and H172. The Proton acceptor role is filled by H179. Y224 bears the Phosphotyrosine mark. T233 is a binding site for substrate.

It belongs to the LDH/MDH superfamily. LDH family. In terms of assembly, homotetramer.

Its subcellular location is the cytoplasm. It catalyses the reaction (S)-lactate + NAD(+) = pyruvate + NADH + H(+). It participates in fermentation; pyruvate fermentation to lactate; (S)-lactate from pyruvate: step 1/1. Allosterically activated by fructose 1,6-bisphosphate (FBP). Catalyzes the conversion of lactate to pyruvate. The protein is L-lactate dehydrogenase of Geobacillus thermodenitrificans (strain NG80-2).